Here is a 160-residue protein sequence, read N- to C-terminus: UPF0178 protein PA14_69280 (160 aa).

The protein belongs to the UPF0178 family.

The chain is UPF0178 protein PA14_69280 from Pseudomonas aeruginosa (strain UCBPP-PA14).